The sequence spans 117 residues: NADPH-dependent 7-cyano-7-deazaguanine reductase (117 aa).

Catalysis depends on cysteine 31, which acts as the Thioimide intermediate. Aspartate 38 functions as the Proton donor in the catalytic mechanism. Residues 53–55 (IEL) and 72–73 (YE) contribute to the substrate site.

Belongs to the GTP cyclohydrolase I family. QueF type 1 subfamily.

It localises to the cytoplasm. The enzyme catalyses 7-aminomethyl-7-carbaguanine + 2 NADP(+) = 7-cyano-7-deazaguanine + 2 NADPH + 3 H(+). The protein operates within tRNA modification; tRNA-queuosine biosynthesis. Its function is as follows. Catalyzes the NADPH-dependent reduction of 7-cyano-7-deazaguanine (preQ0) to 7-aminomethyl-7-deazaguanine (preQ1). This Chlorobaculum tepidum (strain ATCC 49652 / DSM 12025 / NBRC 103806 / TLS) (Chlorobium tepidum) protein is NADPH-dependent 7-cyano-7-deazaguanine reductase.